Consider the following 297-residue polypeptide: MKSRKSYGHLLSPVGSPPLDNESGEAAAAAAAGGGGCGSSAGYVVYGGGGGGDSPAKEQDRFLPIANVSRIMKRSLPANAKISKESKETVQECVSEFISFVTGEASDKCQREKRKTINGDDLLWAMTTLGFEAYVGPLKSYLNRYREAEGEKADVLGGAGGAAAARHGEGGCCGGGGGGADGVVIDGHYPLAGGLSHSHHGHQQQDGGGDVGLMMGGGDAGVGYNAGAGSTTTAFYAPAATAASGNKAYCGGDGSRVMEFEGIGGEEESGGGGGGGERGFAGHLHGVQWFRLKRNTN.

The interval 1-25 is disordered; sequence MKSRKSYGHLLSPVGSPPLDNESGE. Residues 63–69 mediate DNA binding; it reads LPIANVS. A subunit association domain (SAD) region spans residues 90–101; it reads VQECVSEFISFV.

It belongs to the NFYB/HAP3 subunit family. Heterotrimeric transcription factor composed of three components, NF-YA, NF-YB and NF-YC. NF-YB and NF-YC must interact and dimerize for NF-YA association and DNA binding. Interacts with NFYC2, NFYC4 and NFYC6. Expressed in roots, culms, nodes, leaf blades, leaf sheaths and young panicles.

It is found in the nucleus. Its subcellular location is the cytoplasm. Functionally, probable transcription factor involved in the regulation of flowering time under long day (LD) conditions. Functions as a repressor of flowering, independently of HD1 and GHD7. Controls flowering time by negatively regulating the expression of EHD1 and HD3A. Regulates plant height by promoting cell elongation in the internodes. Component of the NF-Y/HAP transcription factor complex. This is Nuclear transcription factor Y subunit B-11 (HD5) from Oryza sativa subsp. japonica (Rice).